The sequence spans 281 residues: CDAN1-interacting nuclease 1 (281 aa).

The protein resides in the nucleus. It is found in the cytoplasm. Plays a role in erythroid cell differentiation. This Bos taurus (Bovine) protein is CDAN1-interacting nuclease 1 (CDIN1).